A 287-amino-acid chain; its full sequence is MSKSDYIQNMFQTKSFVDRYKYTEKLTGLYAQTLVDYSGVANTSQKPLVVLDNACGIGAVSSVLNHTLQDEAKKTWKLTCGDLSEGMLETTKRRLQDEGWVNAETKIVNALDTGLPDGHYTHVFVAFGFQSFPDANAALKECFRILASGGILASSTWQNFNWIPIMKAAIETIPGNLPFPTQKEFIALHNAGWDSESYIQSELEKLGFRDVKVIPVPKETSIPIDEFFEVCMMIIPYLLPKFWTEEQRESHEKDVPMVLRQYLQDTYGANGQVPLEAVALITTGLKP.

Thr-27 and Ala-54 together coordinate S-adenosyl-L-methionine. An intrachain disulfide couples Cys-55 to Cys-80. Asp-82, Met-87, Asn-109, Ala-110, Ala-126, and Arg-248 together coordinate S-adenosyl-L-methionine.

This sequence belongs to the class I-like SAM-binding methyltransferase superfamily.

It localises to the cytoplasm. It catalyses the reaction a thiol + S-adenosyl-L-methionine = a methyl thioether + S-adenosyl-L-homocysteine + H(+). Functionally, S-methyltransferase that catalyzes the irreversible conversion of the secondary metabolite gliotoxin to bis(methylthio)gliotoxin (BmGT). Gliotoxin, a member of the epipolythiodioxopiperazine (ETP) class of toxins, is characterized by a disulfide bridged cyclic dipeptide. Its thiol groups are essential for bioactivity, as they conjugate to sulfur-containing proteins, disturb the intracellular redox equilibrium, and generate reactive oxygen species by cycling between reduced and oxidized states. The enzyme prevents self-intoxication of the fungus by irreversible conversion of the toxic gliotoxin to a biologically inactive bis-thiomethylated derivative. Appears to negatively regulate gliotoxin biosynthesis. In Aspergillus fumigatus (strain ATCC MYA-4609 / CBS 101355 / FGSC A1100 / Af293) (Neosartorya fumigata), this protein is Gliotoxin thiomethyltransferase GtmA.